The sequence spans 260 residues: Cytochrome c oxidase subunit 3 (260 aa).

The next 7 helical transmembrane spans lie at 14–34 (PWPL…ILWF), 41–61 (LLLA…RDVI), 81–101 (GMIL…WAFF), 126–146 (FLVP…VTWA), 158–178 (AIQG…LQAW), 196–216 (FFVA…FLFI), and 238–258 (AWYW…ICWW).

Belongs to the cytochrome c oxidase subunit 3 family. In terms of assembly, component of the cytochrome c oxidase (complex IV, CIV), a multisubunit enzyme composed of a catalytic core of 3 subunits and several supernumerary subunits. The complex exists as a monomer or a dimer and forms supercomplexes (SCs) in the inner mitochondrial membrane with ubiquinol-cytochrome c oxidoreductase (cytochrome b-c1 complex, complex III, CIII).

It is found in the mitochondrion inner membrane. The catalysed reaction is 4 Fe(II)-[cytochrome c] + O2 + 8 H(+)(in) = 4 Fe(III)-[cytochrome c] + 2 H2O + 4 H(+)(out). In terms of biological role, component of the cytochrome c oxidase, the last enzyme in the mitochondrial electron transport chain which drives oxidative phosphorylation. The respiratory chain contains 3 multisubunit complexes succinate dehydrogenase (complex II, CII), ubiquinol-cytochrome c oxidoreductase (cytochrome b-c1 complex, complex III, CIII) and cytochrome c oxidase (complex IV, CIV), that cooperate to transfer electrons derived from NADH and succinate to molecular oxygen, creating an electrochemical gradient over the inner membrane that drives transmembrane transport and the ATP synthase. Cytochrome c oxidase is the component of the respiratory chain that catalyzes the reduction of oxygen to water. Electrons originating from reduced cytochrome c in the intermembrane space (IMS) are transferred via the dinuclear copper A center (CU(A)) of subunit 2 and heme A of subunit 1 to the active site in subunit 1, a binuclear center (BNC) formed by heme A3 and copper B (CU(B)). The BNC reduces molecular oxygen to 2 water molecules using 4 electrons from cytochrome c in the IMS and 4 protons from the mitochondrial matrix. This chain is Cytochrome c oxidase subunit 3 (COIII), found in Patiria pectinifera (Starfish).